Consider the following 793-residue polypeptide: Toll-like receptor 6 (793 aa).

An N-terminal signal peptide occupies residues 1-23 (MIKDKESPIRSCHFVYIVALVFG). The Extracellular portion of the chain corresponds to 24–584 (TIIQFSDESE…FQVSELSCNT (561 aa)). LRR repeat units lie at residues 54-77 (TKVL…FLSG), 78-101 (LRVL…FNHD), 102-122 (LEYL…PITT), 123-147 (TLKH…GNLT), 148-168 (QLNF…LPIA), 169-196 (HLHL…ILNT), 197-219 (KKLH…SANS), 220-250 (LGCL…GGPT), 251-277 (LLNF…WPKP), 278-303 (IEYL…YKTT), 304-330 (LKAL…VFSE), 331-354 (MNIL…EPST), 355-378 (FKFL…TLAR), 379-404 (LETL…DMLS), 405-428 (LETL…SWVG), 429-449 (SIVV…RCLP), 450-473 (PRIK…TGLE), 474-495 (TLQE…GIFS), and 496-519 (SLSI…QSCQ). The N-linked (GlcNAc...) asparagine glycan is linked to N63. C117 and C140 are oxidised to a cystine. N-linked (GlcNAc...) asparagine glycosylation is present at N145. A disulfide bridge links C235 with C265. N-linked (GlcNAc...) asparagine glycans are attached at residues N253 and N285. A disulfide bond links C348 and C373. N-linked (GlcNAc...) asparagine glycosylation is present at N359. N-linked (GlcNAc...) asparagine glycans are attached at residues N423 and N434. A disulfide bond links C424 and C447. Residues 520 to 575 (KIRSLKAGNNPFQCSCELRDFIQSVGQVSSDVVEGWPESYKCDYPESYKGTPLKDF) form the LRRCT domain. The helical transmembrane segment at 585–605 (ALLIITIVVPGLVLAVAVTVL) threads the bilayer. Topologically, residues 606–793 (CIYLDLPWYL…KLMEKAAEIH (188 aa)) are cytoplasmic. In terms of domain architecture, TIR spans 640–781 (LQFHAFISYS…LFWANLRASI (142 aa)).

It belongs to the Toll-like receptor family. Homodimer (via cytoplasmic TIR domain). Heterodimer with TLR2 via their respective extracellular domains. Binds MYD88 via their respective TIR domains. Interacts with CD36, following CD36 stimulation by oxLDL or amyloid-beta 42, and forms a heterodimer with TLR4. The trimeric complex is internalized and triggers inflammatory response. LYN kinase activity facilitates TLR4-TLR6 heterodimerization and signal initiation. The heterodimer TLR2:TLR6 interacts with CD14 and CD36 in response to triacylated lipopeptides. Highest expression levels seen in blood and lymph node, intermediate expression seen in spleen and lowest expression seen in the liver, lung and udder cistern.

Its subcellular location is the cell membrane. The protein localises to the cytoplasmic vesicle. It localises to the phagosome membrane. The protein resides in the membrane raft. It is found in the golgi apparatus. Its function is as follows. Participates in the innate immune response to Gram-positive bacteria and fungi. Specifically recognizes diacylated and, to a lesser extent, triacylated lipopeptides. In response to diacylated lipopeptides, forms the activation cluster TLR2:TLR6:CD14:CD36, this cluster triggers signaling from the cell surface and subsequently is targeted to the Golgi in a lipid-raft dependent pathway. Acts via MYD88 and TRAF6, leading to NF-kappa-B activation, cytokine secretion and the inflammatory response. Recognizes mycoplasmal macrophage-activating lipopeptide-2kD (MALP-2), soluble tuberculosis factor (STF), phenol-soluble modulin (PSM) and B.burgdorferi outer surface protein A lipoprotein (OspA-L) cooperatively with TLR2. In complex with TLR4, promotes sterile inflammation in monocytes/macrophages in response to oxidized low-density lipoprotein (oxLDL) or amyloid-beta 42. In this context, the initial signal is provided by oxLDL- or amyloid-beta 42-binding to CD36. This event induces the formation of a heterodimer of TLR4 and TLR6, which is rapidly internalized and triggers inflammatory response, leading to the NF-kappa-B-dependent production of CXCL1, CXCL2 and CCL9 cytokines, via MYD88 signaling pathway, and CCL5 cytokine, via TICAM1 signaling pathway, as well as IL1B secretion. The protein is Toll-like receptor 6 of Bos taurus (Bovine).